A 328-amino-acid polypeptide reads, in one-letter code: GMP reductase (328 aa).

The active-site Thioimidate intermediate is cysteine 176. An NADP(+)-binding site is contributed by 205-228; that stretch reads IIADGGIRTHGDIAKSIRFGASMI.

The protein belongs to the IMPDH/GMPR family. GuaC type 2 subfamily.

The catalysed reaction is IMP + NH4(+) + NADP(+) = GMP + NADPH + 2 H(+). Catalyzes the irreversible NADPH-dependent deamination of GMP to IMP. It functions in the conversion of nucleobase, nucleoside and nucleotide derivatives of G to A nucleotides, and in maintaining the intracellular balance of A and G nucleotides. This chain is GMP reductase, found in Streptococcus pneumoniae (strain CGSP14).